A 323-amino-acid polypeptide reads, in one-letter code: Putative CDC123-like protein L884 (323 aa).

This sequence belongs to the CDC123 family.

The protein is Putative CDC123-like protein L884 of Acanthamoeba polyphaga mimivirus (APMV).